Reading from the N-terminus, the 371-residue chain is 3-isopropylmalate dehydrogenase (371 aa).

At Thr55 the chain carries Phosphothreonine. 78 to 89 contacts NAD(+); sequence GPEWTNPNCRPE. Substrate contacts are provided by Arg96, Arg106, Arg135, and Asp224. Positions 224, 249, and 253 each coordinate Mg(2+). 290–302 contacts NAD(+); the sequence is GSAPDIAGKGIVN.

The protein belongs to the isocitrate and isopropylmalate dehydrogenases family. As to quaternary structure, homodimer. Mg(2+) serves as cofactor. Requires Mn(2+) as cofactor.

The protein resides in the cytoplasm. The enzyme catalyses (2R,3S)-3-isopropylmalate + NAD(+) = 4-methyl-2-oxopentanoate + CO2 + NADH. It participates in amino-acid biosynthesis; L-leucine biosynthesis; L-leucine from 3-methyl-2-oxobutanoate: step 3/4. Functionally, catalyzes the oxidation of 3-carboxy-2-hydroxy-4-methylpentanoate (3-isopropylmalate) to 3-carboxy-4-methyl-2-oxopentanoate. The product decarboxylates to 4-methyl-2 oxopentanoate. The sequence is that of 3-isopropylmalate dehydrogenase (leu1) from Schizosaccharomyces pombe (strain 972 / ATCC 24843) (Fission yeast).